The following is a 101-amino-acid chain: Urease subunit beta (101 aa).

It belongs to the urease beta subunit family. Heterotrimer of UreA (gamma), UreB (beta) and UreC (alpha) subunits. Three heterotrimers associate to form the active enzyme.

The protein localises to the cytoplasm. The catalysed reaction is urea + 2 H2O + H(+) = hydrogencarbonate + 2 NH4(+). It participates in nitrogen metabolism; urea degradation; CO(2) and NH(3) from urea (urease route): step 1/1. In Cereibacter sphaeroides (strain ATCC 17025 / ATH 2.4.3) (Rhodobacter sphaeroides), this protein is Urease subunit beta.